Consider the following 372-residue polypeptide: Cytochrome b (372 aa).

Helical transmembrane passes span 25-45, 69-90, 105-125, and 170-190; these read FGSM…FLAI, WIMQ…YIHI, WLSG…GYVL, and FFAL…IHIM. Heme b is bound by residues H75 and H89. Residues H174 and H188 each contribute to the heme b site. H193 contributes to the a ubiquinone binding site. The next 4 membrane-spanning stretches (helical) occupy residues 218–238, 280–300, 312–332, and 339–358; these read HKDI…MTLT, LGGT…PFTH, LTQL…WAAT, and FTMI…IMNP.

The protein belongs to the cytochrome b family. The cytochrome bc1 complex contains 3 respiratory subunits (MT-CYB, CYC1 and UQCRFS1), 2 core proteins (UQCRC1 and UQCRC2) and probably 6 low-molecular weight proteins. Heme b is required as a cofactor.

It localises to the mitochondrion inner membrane. Functionally, component of the ubiquinol-cytochrome c reductase complex (complex III or cytochrome b-c1 complex) that is part of the mitochondrial respiratory chain. The b-c1 complex mediates electron transfer from ubiquinol to cytochrome c. Contributes to the generation of a proton gradient across the mitochondrial membrane that is then used for ATP synthesis. The protein is Cytochrome b (MT-CYB) of Lycodon semicarinatus (Ryukyu odd-tooth snake).